A 1235-amino-acid chain; its full sequence is DNA polymerase catalytic subunit (1235 aa).

Disordered stretches follow at residues 640 to 691 and 1098 to 1134; these read QGRF…ETAG and AAAP…ASKP. Positions 650-661 are enriched in basic and acidic residues; sequence APKRPAAAREDE. Over residues 662 to 675 the composition is skewed to acidic residues; that stretch reads ERPEEEGEDEDERE. Residues 676–691 show a composition bias toward basic and acidic residues; it reads EGGGEREPDGARETAG.

Belongs to the DNA polymerase type-B family. In terms of assembly, forms a complex with the ssDNA-binding protein UL29, the DNA polymerase processivity factor, and the alkaline exonuclease. Interacts with the putative helicase-primase complex subunit UL8; this interaction may coordinate leading and lagging strand DNA synthesis at the replication fork.

It localises to the host nucleus. The enzyme catalyses DNA(n) + a 2'-deoxyribonucleoside 5'-triphosphate = DNA(n+1) + diphosphate. The catalysed reaction is Endonucleolytic cleavage to 5'-phosphomonoester.. Functionally, replicates viral genomic DNA. The replication complex is composed of six viral proteins: the DNA polymerase, processivity factor, primase, primase-associated factor, helicase, and ssDNA-binding protein. Additionally, the polymerase contains an intrinsic ribonuclease H (RNase H) activity that specifically degrades RNA/DNA heteroduplexes or duplex DNA substrates in the 5' to 3' direction. Therefore, it can catalyze the excision of the RNA primers that initiate the synthesis of Okazaki fragments at a replication fork during viral DNA replication. This chain is DNA polymerase catalytic subunit, found in Homo sapiens (Human).